The sequence spans 235 residues: MSKQLIYSGKAKDIYTTEDENLIISTYKDQATAFNGVKKEQIAGKGVLNNQISSFIFEKLNVAGVATHFVEKLSDTEQLNKKVKIIPLEVVLRNYTAGSFSKRFGVDEGIALETPIVEFYYKNDDLDDPFINDEHVKFLQIAGDQQIAYLKEETRRINELLKVWFAEIGLKLIDFKLEFGFDKDGKIILADEFSPDNCRLWDADGNHMDKDVFRRGLGELTDVYEIVWEKLQGLK.

Belongs to the SAICAR synthetase family.

It catalyses the reaction 5-amino-1-(5-phospho-D-ribosyl)imidazole-4-carboxylate + L-aspartate + ATP = (2S)-2-[5-amino-1-(5-phospho-beta-D-ribosyl)imidazole-4-carboxamido]succinate + ADP + phosphate + 2 H(+). It functions in the pathway purine metabolism; IMP biosynthesis via de novo pathway; 5-amino-1-(5-phospho-D-ribosyl)imidazole-4-carboxamide from 5-amino-1-(5-phospho-D-ribosyl)imidazole-4-carboxylate: step 1/2. The protein is Phosphoribosylaminoimidazole-succinocarboxamide synthase of Streptococcus pneumoniae (strain ATCC 700669 / Spain 23F-1).